Consider the following 97-residue polypeptide: Protein MxiI (97 aa).

It to S.typhimurium PrgJ.

In terms of biological role, necessary for the secretion of IPA invasins. The chain is Protein MxiI (mxiI) from Shigella flexneri.